A 1084-amino-acid chain; its full sequence is Autophagy-related protein 11 (1084 aa).

Coiled-coil stretches lie at residues 585-739 (VQNL…LTES) and 847-879 (VIRR…TNDK). 2 disordered regions span residues 925-961 (SMIP…NMNR) and 973-1007 (NIGS…STNA). Composition is skewed to low complexity over residues 940 to 949 (SNTNNSNPSS) and 973 to 993 (NIGS…NGNN). Residues 994 to 1007 (KPETNIDTTSSTNA) show a composition bias toward polar residues.

This sequence belongs to the ATG11 family. As to quaternary structure, homodimer and potential homooligomers. Interacts with ATG1 kinase and the ATG19 and ATG34 cargo protein transporters. Interacts with ATG9, ATG17 and ATG20.

Its subcellular location is the preautophagosomal structure membrane. The protein localises to the vacuole membrane. Involved in cytoplasm to vacuole transport (Cvt), pexophagy, mitophagy and nucleophagy. Recruits mitochondria for their selective degradation via autophagy (mitophagy) during starvation, through its interaction with ATG32. Works as scaffold proteins that recruit ATG proteins to the pre-autophagosome (PAS), the site of vesicle/autophagosome formation. Required for ATG9 anterograde transport from the mitochondria to the PAS. Also recruits the ATG19-prAPE1 complex to the PAS. Required for the Cvt vesicles completion. This is Autophagy-related protein 11 from Kluyveromyces marxianus (strain DMKU3-1042 / BCC 29191 / NBRC 104275) (Yeast).